A 454-amino-acid chain; its full sequence is Ribosomal protein uS12 methylthiotransferase RimO (454 aa).

In terms of domain architecture, MTTase N-terminal spans 14–125 (SKVAFSHVGC…IAKVLDRVEQ (112 aa)). Positions 23, 59, 88, 163, 167, and 170 each coordinate [4Fe-4S] cluster. The region spanning 149-378 (DKNKFVAYLR…ISVQQNISKD (230 aa)) is the Radical SAM core domain. A TRAM domain is found at 381-452 (QTYVGSKMKI…EYDLYGEIIK (72 aa)).

The protein belongs to the methylthiotransferase family. RimO subfamily. [4Fe-4S] cluster is required as a cofactor.

It is found in the cytoplasm. It carries out the reaction L-aspartate(89)-[ribosomal protein uS12]-hydrogen + (sulfur carrier)-SH + AH2 + 2 S-adenosyl-L-methionine = 3-methylsulfanyl-L-aspartate(89)-[ribosomal protein uS12]-hydrogen + (sulfur carrier)-H + 5'-deoxyadenosine + L-methionine + A + S-adenosyl-L-homocysteine + 2 H(+). Its function is as follows. Catalyzes the methylthiolation of an aspartic acid residue of ribosomal protein uS12. This chain is Ribosomal protein uS12 methylthiotransferase RimO, found in Prochlorococcus marinus (strain AS9601).